Here is a 540-residue protein sequence, read N- to C-terminus: Glucose-6-phosphate isomerase (540 aa).

The Proton donor role is filled by Glu-346. Catalysis depends on residues His-377 and Lys-505.

It belongs to the GPI family.

The protein localises to the cytoplasm. It carries out the reaction alpha-D-glucose 6-phosphate = beta-D-fructose 6-phosphate. The protein operates within carbohydrate biosynthesis; gluconeogenesis. It participates in carbohydrate degradation; glycolysis; D-glyceraldehyde 3-phosphate and glycerone phosphate from D-glucose: step 2/4. Catalyzes the reversible isomerization of glucose-6-phosphate to fructose-6-phosphate. The protein is Glucose-6-phosphate isomerase of Francisella philomiragia subsp. philomiragia (strain ATCC 25017 / CCUG 19701 / FSC 153 / O#319-036).